A 430-amino-acid chain; its full sequence is ATP-dependent RNA helicase cgh-1 (430 aa).

The Q motif motif lies at 43-71; the sequence is VEFEDFCLGRDLLMGIFEKGWEKPSPIQE. Residues 74–244 form the Helicase ATP-binding domain; it reads IGVALTGQDI…QKHMHKPYEI (171 aa). 87–94 contacts ATP; the sequence is AKNGTGKT. Positions 192 to 195 match the DEAD box motif; the sequence is DEAD. Residues 254-414 form the Helicase C-terminal domain; it reads GVTQYYAFVQ…PIPKTVDPKL (161 aa).

Belongs to the DEAD box helicase family. DDX6/DHH1 subfamily. In terms of assembly, interacts with car-1 in a germline ribonucleoprotein complex. Interacts with ifet-1. Interacts with oma-1, which is a component of a ribonucleoprotein complex, in an RNA-dependent manner. Expression is restricted to two germline precursors Z2 and Z3 in L1 stage hermaphrodites, and is detectable specifically in the gonad at low levels into the L3 stage. Expression is significantly higher during the early L4 stage. In adults, expression remains gonad-specific and was not apparent in the somatically derived uterus. Expressed in germ granules (P granules); when associated with pgl-1.

It is found in the cytoplasm. It catalyses the reaction ATP + H2O = ADP + phosphate + H(+). In terms of biological role, probable RNA helicase required for oocyte and sperm function. Also required to prevent the physiological germline apoptosis mechanism killing essentially all developing oocytes. The protein is ATP-dependent RNA helicase cgh-1 (cgh-1) of Caenorhabditis elegans.